The chain runs to 264 residues: Short chain dehydrogenase/reductase AacuN (264 aa).

I24, D70, N97, and R130 together coordinate NADP(+). Active-site proton donor residues include S146, S147, and Y161. NADP(+) is bound by residues Y161, K165, and T196. K165 acts as the Lowers pKa of active site Tyr in catalysis.

This sequence belongs to the short-chain dehydrogenases/reductases (SDR) family.

It carries out the reaction 3,8,9,10-tetrahydroxy-6-methyl-1,4-dihydroanthracen-1-one + NADPH + H(+) = (3R)-3,8,9,10-tetrahydroxy-6-methyl-1,2,3,4-tetrahydroanthracen-1-one + NADP(+). Its pathway is secondary metabolite biosynthesis. Its function is as follows. Atrochrysone carboxylic acid synthase; part of the gene cluster that mediates the biosynthesis of the tetrahydroxanthone dimer secalonic acid D. The pathway begins with the synthesis of atrochrysone thioester by the polyketide synthase AacuL. The atrochrysone carboxyl ACP thioesterase AacuM then breaks the thioester bond and releases the atrochrysone carboxylic acid from AacuL. Atrochrysone carboxylic acid is decarboxylated by the decarboxylase AacuI, and oxidized by the anthrone oxygenase AacuG to yield emodin. Emodin is then reduced to emodin hydroquinone by a yet unidentified oxidoreductase. A-ring reduction by the short chain dehydrogenase AacuN, dehydration by the scytalone dehydratase-like protein AacuK and probable spontaneous re-oxidation, results in overall deoxygenation to chrysophanol. Baeyer-Villiger oxidation by the Baeyer-Villiger monooxygenase (BVMO) AacuH then yields monodictyphenone. Monodictyphenone is transformed into compounds with the tetrahydroxanthone skeleton via methylesterification by the methyltransferase AacuQ, followed by the action of the flavin-dependent monooxygenase AacuC, the isomerase AacuP, and the short chain dehydrogenase/reductase AacuF or AacuD. AacuF and AacuD should accept the same compound as a substrate but perform the ketoreduction with a different stereoselectivity, thus yielding blennolides B and A, respectively. In the final step of the biosynthesis, the cytochrome P450 monooxygenase AacuE accepts blennolide B and/or blennolide A to conduct the dimerization reaction to furnish the tetrahydroxanthone dimers, secalonic acids D, B, and F. The chain is Short chain dehydrogenase/reductase AacuN from Aspergillus aculeatus (strain ATCC 16872 / CBS 172.66 / WB 5094).